Here is a 48-residue protein sequence, read N- to C-terminus: Large ribosomal subunit protein eL40 (48 aa).

It belongs to the eukaryotic ribosomal protein eL40 family.

The chain is Large ribosomal subunit protein eL40 from Methanobrevibacter smithii (strain ATCC 35061 / DSM 861 / OCM 144 / PS).